Consider the following 592-residue polypeptide: Beta-xylosidase (592 aa).

The first 19 residues, 1 to 19, serve as a signal peptide directing secretion; it reads MYLNACRALTLISVLSLLA. The N-palmitoyl cysteine moiety is linked to residue C20. Residue C20 is the site of S-diacylglycerol cysteine attachment.

This sequence belongs to the glycosyl hydrolase 43 family.

It localises to the cell outer membrane. Xylosidase involved in ulvan degradation. Ulvan is the main polysaccharide component of the Ulvales (green seaweed) cell wall. It is composed of disaccharide building blocks comprising 3-sulfated rhamnose (Rha3S) linked to D-glucuronic acid (GlcA), L-iduronic acid (IduA), or D-xylose (Xyl). Beta-xylosidase converts Xyl-Rha3S, a product of alpha-L-rhamnosidase acting on Rha-Xyl-Rha3S oligosaccharides, further to Xyl and Rha3S. This is Beta-xylosidase from Formosa agariphila (strain DSM 15362 / KCTC 12365 / LMG 23005 / KMM 3901 / M-2Alg 35-1).